The sequence spans 472 residues: Tryptophanase (472 aa).

Lys-270 is subject to N6-(pyridoxal phosphate)lysine.

This sequence belongs to the beta-eliminating lyase family. As to quaternary structure, homotetramer. Pyridoxal 5'-phosphate is required as a cofactor.

It carries out the reaction L-tryptophan + H2O = indole + pyruvate + NH4(+). It functions in the pathway amino-acid degradation; L-tryptophan degradation via pyruvate pathway; indole and pyruvate from L-tryptophan: step 1/1. The protein is Tryptophanase of Haemophilus influenzae (strain 86-028NP).